A 328-amino-acid polypeptide reads, in one-letter code: UPF0285 protein MJ1370 (328 aa).

The protein belongs to the UPF0285 family.

The chain is UPF0285 protein MJ1370 from Methanocaldococcus jannaschii (strain ATCC 43067 / DSM 2661 / JAL-1 / JCM 10045 / NBRC 100440) (Methanococcus jannaschii).